The sequence spans 504 residues: Anaerobic nitric oxide reductase transcription regulator NorR (504 aa).

D57 carries the 4-aspartylphosphate modification. Residues 187–416 (MIGLSPGMMQ…LEHAIHRAVV (230 aa)) enclose the Sigma-54 factor interaction domain. ATP is bound by residues 215–222 (GETGTGKE) and 278–287 (ADNGTLFLDE). The H-T-H motif DNA-binding region spans 479-498 (WAACARALEMDVANLHRLAK).

It participates in nitrogen metabolism; nitric oxide reduction. Required for the expression of anaerobic nitric oxide (NO) reductase, acts as a transcriptional activator for at least the norVW operon. Activation also requires sigma-54. In Enterobacter sp. (strain 638), this protein is Anaerobic nitric oxide reductase transcription regulator NorR.